We begin with the raw amino-acid sequence, 605 residues long: MVLPKIFSYDIDERINLIQTITGKKPADIVISNVNLVLTPTGEILDNASIIISGKRIAGAGKYSELHRFIGKNTLVIDGENNYAMPGFIDPHIHIESSLLTPHGFAKLALRHGTTTVVADPHEIGNVLGSRGVEIFMDAARNLPLKILIDIPSCVPATDPKFGLETTANIIGADEVEKLAALEGTIGLGEVMDFVSVLNSNKSVLEKIRVAHRYRLIVNGHAPLLRGAELDAYIDAGIWSDHESTIYEEALEKARKGMYVFIREGSAWKDLKALLPLIKNHTIDHRFLSFASDDINVVDLMEKGHMDRIINIAIEYGVDPVKAIQLATIGPAMRIHLEDHVGVVGPARLADIVLSKNIEYIKPHTVIANGEIIYYKGELKKTFNNYKYPEETLNTVKLAKIPEPQEFIPKINTREGIVEANIIEVTPGSALTKHVIEELAVKNYNVLADPNRDIIYAAVIDRHKATGSMGKGFIKGLGFRAGAIAQTIAHDTHNLIVAGNNPEDMSRAVKRIVEIQGGIVVVDEGKIIGELPLRLAGLMSIEEPETVYEKYKKITNELNNGYGLEFESFFMTLALVALPVIPEIRLTDKGLVDVRKAKLIPLINK.

Belongs to the metallo-dependent hydrolases superfamily. Adenine deaminase family. Requires Mn(2+) as cofactor.

It carries out the reaction adenine + H2O + H(+) = hypoxanthine + NH4(+). This Staphylothermus marinus (strain ATCC 43588 / DSM 3639 / JCM 9404 / F1) protein is Adenine deaminase.